Reading from the N-terminus, the 320-residue chain is Bifunctional phosphoglucose/phosphomannose isomerase (320 aa).

The SIS domain maps to 20–153 (IAKDLTPYKG…NLLGVDKDEL (134 aa)). D-fructose 6-phosphate is bound by residues Gly-37, Ser-38, Ser-80, Ser-82, Thr-85, and Arg-132. The Proton acceptor role is filled by Glu-204. D-fructose 6-phosphate contacts are provided by His-220 and Lys-313. His-220 serves as the catalytic Proton donor. Catalysis depends on Lys-313, which acts as the Proton acceptor.

Belongs to the PGI/PMI family. Homodimer.

The catalysed reaction is alpha-D-glucose 6-phosphate = beta-D-fructose 6-phosphate. The enzyme catalyses D-mannose 6-phosphate = D-fructose 6-phosphate. Its function is as follows. Dual specificity isomerase that catalyzes the isomerization of both glucose-6-phosphate and mannose-6-phosphate to fructose-6-phosphate. The protein is Bifunctional phosphoglucose/phosphomannose isomerase of Aquifex aeolicus (strain VF5).